Consider the following 221-residue polypeptide: ATP-dependent Clp protease proteolytic subunit 1, mitochondrial (221 aa).

Residues 1–25 (MLRRLVTSSLSASRSMSASVQSRVG) constitute a mitochondrion transit peptide. The active-site Nucleophile is S120. Residue H145 is part of the active site.

Belongs to the peptidase S14 family. In terms of assembly, tetradecamer that assembles into a two heptameric rings with a central cavity. As to expression, expressed in the intestine.

Its subcellular location is the mitochondrion matrix. The enzyme catalyses Hydrolysis of proteins to small peptides in the presence of ATP and magnesium. alpha-casein is the usual test substrate. In the absence of ATP, only oligopeptides shorter than five residues are hydrolyzed (such as succinyl-Leu-Tyr-|-NHMec, and Leu-Tyr-Leu-|-Tyr-Trp, in which cleavage of the -Tyr-|-Leu- and -Tyr-|-Trp bonds also occurs).. Its function is as follows. Clp cleaves peptides in various proteins in a process that requires ATP hydrolysis. Clp may be responsible for a fairly general and central housekeeping function rather than for the degradation of specific substrates. The protein is ATP-dependent Clp protease proteolytic subunit 1, mitochondrial (clpp-1) of Caenorhabditis elegans.